A 242-amino-acid chain; its full sequence is MLMTTNEPVNAGDLAAREAAALYRLMTWLSPAFPVGGFSYSSGIEWAVEAGDITDTATLADWLDTMLGDGSGFCDATFLVQAYRATEAGEETSLRDIAELASAFVPSRERQLETTSQGRAFIDIARAAWDAEGLDAMVAACRTPLVYPVAVGVVAAMHGVPLAPTLHAFLHAVVSNWISAASRLIPLGQTDSQRVLVRLEAAVAATATRALSATLDDLGSATFRADLASLRHETQYTRLFRS.

This sequence belongs to the UreF family. UreD, UreF and UreG form a complex that acts as a GTP-hydrolysis-dependent molecular chaperone, activating the urease apoprotein by helping to assemble the nickel containing metallocenter of UreC. The UreE protein probably delivers the nickel.

Its subcellular location is the cytoplasm. Required for maturation of urease via the functional incorporation of the urease nickel metallocenter. The chain is Urease accessory protein UreF from Bradyrhizobium diazoefficiens (strain JCM 10833 / BCRC 13528 / IAM 13628 / NBRC 14792 / USDA 110).